Here is a 225-residue protein sequence, read N- to C-terminus: Imidazole glycerol phosphate synthase subunit HisH (225 aa).

One can recognise a Glutamine amidotransferase type-1 domain in the interval 3–225 (TIAIVDYGMG…LYRNFVDWQP (223 aa)). The Nucleophile role is filled by Cys-82. Residues His-205 and Glu-207 contribute to the active site.

In terms of assembly, heterodimer of HisH and HisF.

Its subcellular location is the cytoplasm. The enzyme catalyses 5-[(5-phospho-1-deoxy-D-ribulos-1-ylimino)methylamino]-1-(5-phospho-beta-D-ribosyl)imidazole-4-carboxamide + L-glutamine = D-erythro-1-(imidazol-4-yl)glycerol 3-phosphate + 5-amino-1-(5-phospho-beta-D-ribosyl)imidazole-4-carboxamide + L-glutamate + H(+). It catalyses the reaction L-glutamine + H2O = L-glutamate + NH4(+). It functions in the pathway amino-acid biosynthesis; L-histidine biosynthesis; L-histidine from 5-phospho-alpha-D-ribose 1-diphosphate: step 5/9. Functionally, IGPS catalyzes the conversion of PRFAR and glutamine to IGP, AICAR and glutamate. The HisH subunit catalyzes the hydrolysis of glutamine to glutamate and ammonia as part of the synthesis of IGP and AICAR. The resulting ammonia molecule is channeled to the active site of HisF. The protein is Imidazole glycerol phosphate synthase subunit HisH of Bordetella pertussis (strain Tohama I / ATCC BAA-589 / NCTC 13251).